A 388-amino-acid chain; its full sequence is Succinate--CoA ligase [ADP-forming] subunit beta (388 aa).

The ATP-grasp domain maps to 9 to 245 (KELLAKYGLP…KSQENERELK (237 aa)). ATP-binding positions include Lys46, 53–55 (GRG), Glu100, Tyr103, and Glu108. Asn200 and Asp214 together coordinate Mg(2+). Substrate-binding positions include Asn265 and 322–324 (GIV).

It belongs to the succinate/malate CoA ligase beta subunit family. Heterotetramer of two alpha and two beta subunits. Mg(2+) serves as cofactor.

It catalyses the reaction succinate + ATP + CoA = succinyl-CoA + ADP + phosphate. The enzyme catalyses GTP + succinate + CoA = succinyl-CoA + GDP + phosphate. It functions in the pathway carbohydrate metabolism; tricarboxylic acid cycle; succinate from succinyl-CoA (ligase route): step 1/1. Succinyl-CoA synthetase functions in the citric acid cycle (TCA), coupling the hydrolysis of succinyl-CoA to the synthesis of either ATP or GTP and thus represents the only step of substrate-level phosphorylation in the TCA. The beta subunit provides nucleotide specificity of the enzyme and binds the substrate succinate, while the binding sites for coenzyme A and phosphate are found in the alpha subunit. The polypeptide is Succinate--CoA ligase [ADP-forming] subunit beta (Laribacter hongkongensis (strain HLHK9)).